The sequence spans 143 residues: Large ribosomal subunit protein uL13 (143 aa).

It belongs to the universal ribosomal protein uL13 family. In terms of assembly, part of the 50S ribosomal subunit.

In terms of biological role, this protein is one of the early assembly proteins of the 50S ribosomal subunit, although it is not seen to bind rRNA by itself. It is important during the early stages of 50S assembly. This chain is Large ribosomal subunit protein uL13, found in Albidiferax ferrireducens (strain ATCC BAA-621 / DSM 15236 / T118) (Rhodoferax ferrireducens).